The following is a 1203-amino-acid chain: MIDVNNFEYMKIGLASPDKIRSWSYGEVKKPETINYRTLKPEKDGLFCERIFGPQKDWECHCGKYKRVRYKGVVCDRCGVEVTRAKVRRERMGHIELAAPVSHIWYFKGIPSRMGLVLDMSPRALEEVIYFASYVVTESGDTPLDKKQLLSEKEYRAYRDRYGSTFHAAMGAEAIKKLLQDIDLDKEVDFLKEELKTAQGQRRTRAIKRLEVLEAFRNSGNHPSWMILEVLPVIPPELRPMVQLDGGRFATSDLNDLYRRVINRNNRLKRLLDLGAPSIIVQNEKRMLQEAVDALIDNGRRGRPVTGPGNRPLKSLSHMLKGKQGRFRQNLLGKRVDYSGRSVIVVGPNLKMYQCGLPKEMALELFKPFVMKELVGKGLAHNIKSAKRKIERVHPEVWDVLESVIKEHPVLLNRAPTLHRLGIQAFEPTLVEGRAIRLHPLVCTAYNADFDGDQMAVHVPLSSEAQAEARILMLAAQNILNPKDGKPVVTPSQDMVLGNYYLTLEREGAIGEGMVFKDANEAILAYQNGYVHLHTRVAVAASSVNNVTFTEEQKSKLLLTTVGKLIFNEILPESFPYINEPTNSNLEKETPAEYFVEKGANIKEIIASREEVAPFSKKILGNIIAEVFKRFQITETSRMLDRMKNLGFKYSTKAGITVGVSDILVLGEKDEILHEAQAKVDNVIKQFRRGLITEEERYDRVISIWSNAKDVIQGKLMKSLNKRNPIFMMSDSGARGNASNFTQLAGMRGLMANPSGRIIELPIKSSFREGLTVLEYFISTHGARKGLADTALKTADSGYLTRRLVDVAQDVIVRQDDCGTDRGLLIGAIKEGNEVIESLYDRLVGRFARKTVKHPETGEVLVVENQLITEDIAHIVEKSGVETVNIRSAFTCNTRHGVCKKCYGRNLATGTDVEVGEAVGIIAAQSIGEPGTQLTMRTFHTGGVAGDDITQGLPRIQEIFEARNPKGQAVISEIDGVIAAINDVKDRQEVVVQGEVEARTYAIPYGARLKVTLGQPISHGKELTEGSIDPKELLKVTDITAVQEYLLREVQKVYRMQGVEIGDKHVEVMVRQMLRKVRVSDAGETDVLPGTLLDIHQFTDANAKVLLKGKQPATARPVLLGITKASLETDSFLSAASFQETTRVLTDAAIKGKRDELLGLKENVIIGKLVPAGTGMNRYRKVDLVKTTQDNMNVENDEVYVEQ.

Zn(2+) is bound by residues cysteine 60, cysteine 62, cysteine 75, and cysteine 78. Aspartate 449, aspartate 451, and aspartate 453 together coordinate Mg(2+). Residues cysteine 818, cysteine 892, cysteine 899, and cysteine 902 each contribute to the Zn(2+) site.

Belongs to the RNA polymerase beta' chain family. In terms of assembly, the RNAP catalytic core consists of 2 alpha, 1 beta, 1 beta' and 1 omega subunit. When a sigma factor is associated with the core the holoenzyme is formed, which can initiate transcription. It depends on Mg(2+) as a cofactor. Requires Zn(2+) as cofactor.

It carries out the reaction RNA(n) + a ribonucleoside 5'-triphosphate = RNA(n+1) + diphosphate. Functionally, DNA-dependent RNA polymerase catalyzes the transcription of DNA into RNA using the four ribonucleoside triphosphates as substrates. The polypeptide is DNA-directed RNA polymerase subunit beta' (Bacillus mycoides (strain KBAB4) (Bacillus weihenstephanensis)).